The chain runs to 87 residues: UPF0250 protein ETA_23570 (87 aa).

The protein belongs to the UPF0250 family.

This is UPF0250 protein ETA_23570 from Erwinia tasmaniensis (strain DSM 17950 / CFBP 7177 / CIP 109463 / NCPPB 4357 / Et1/99).